The chain runs to 363 residues: Chorismate synthase (363 aa).

Residues Arg-48 and Arg-54 each coordinate NADP(+). Residues 125 to 127, 238 to 239, Gly-278, 293 to 297, and Arg-319 contribute to the FMN site; these read RSS, NA, and KPTSS.

The protein belongs to the chorismate synthase family. Homotetramer. FMNH2 is required as a cofactor.

The catalysed reaction is 5-O-(1-carboxyvinyl)-3-phosphoshikimate = chorismate + phosphate. It participates in metabolic intermediate biosynthesis; chorismate biosynthesis; chorismate from D-erythrose 4-phosphate and phosphoenolpyruvate: step 7/7. Its function is as follows. Catalyzes the anti-1,4-elimination of the C-3 phosphate and the C-6 proR hydrogen from 5-enolpyruvylshikimate-3-phosphate (EPSP) to yield chorismate, which is the branch point compound that serves as the starting substrate for the three terminal pathways of aromatic amino acid biosynthesis. This reaction introduces a second double bond into the aromatic ring system. The chain is Chorismate synthase from Acidithiobacillus ferrooxidans (strain ATCC 23270 / DSM 14882 / CIP 104768 / NCIMB 8455) (Ferrobacillus ferrooxidans (strain ATCC 23270)).